Consider the following 380-residue polypeptide: DNA replication and repair protein RecF (380 aa).

30–37 is a binding site for ATP; that stretch reads GENAQGKT.

Belongs to the RecF family.

The protein localises to the cytoplasm. In terms of biological role, the RecF protein is involved in DNA metabolism; it is required for DNA replication and normal SOS inducibility. RecF binds preferentially to single-stranded, linear DNA. It also seems to bind ATP. The chain is DNA replication and repair protein RecF from Synechococcus sp. (strain JA-2-3B'a(2-13)) (Cyanobacteria bacterium Yellowstone B-Prime).